The following is a 424-amino-acid chain: Phosphoribosylamine--glycine ligase (424 aa).

The ATP-grasp domain occupies 111–312; sequence KAFVKECGIK…LLDLFLATAK (202 aa). 137–189 serves as a coordination point for ATP; that stretch reads IQNASFPLVIKALNKNTSIVHHQEEALKILEDALKQSNEPVIIEPFLEGFELS.

This sequence belongs to the GARS family.

It catalyses the reaction 5-phospho-beta-D-ribosylamine + glycine + ATP = N(1)-(5-phospho-beta-D-ribosyl)glycinamide + ADP + phosphate + H(+). It functions in the pathway purine metabolism; IMP biosynthesis via de novo pathway; N(1)-(5-phospho-D-ribosyl)glycinamide from 5-phospho-alpha-D-ribose 1-diphosphate: step 2/2. This Helicobacter pylori (strain J99 / ATCC 700824) (Campylobacter pylori J99) protein is Phosphoribosylamine--glycine ligase (purD).